Consider the following 119-residue polypeptide: MGNRAFKSHHGHFLSAEDCKVKTHHGHHDHHTHFHVENHGHHKVAIRTHANKYVSINDNNDVYISHHFHGEHSLFHLEHHGGKVSIKGHNHYYIAADQHGSIYTTHHHHHDATFEEFIV.

Residue Gly-2 is the site of N-myristoyl glycine attachment. Residues Ser-8–His-110 are contains several HHXH repeats. 2 consecutive repeat copies span residues Phe-34–Arg-47 and Phe-75–Lys-87. Residues Phe-34 to Lys-87 form a 2 X 13 AA approximate repeats region.

It belongs to the hisactophilin family. Phosphorylated.

It localises to the cytoplasm. It is found in the cell membrane. May act as an intracellular pH sensor that links chemotactic signals to responses in the microfilament system of the cells by nucleating actin polymerization or stabilizing the filaments. In Dictyostelium discoideum (Social amoeba), this protein is Hisactophilin-3 (hatC).